Here is a 187-residue protein sequence, read N- to C-terminus: Mitochondrial intermembrane space import and assembly protein 40 (187 aa).

The transit peptide at 1 to 24 directs the protein to the mitochondrion; that stretch reads MFRPASRALLRAPAVARGPASRRL. Residues 25-43 lie on the Mitochondrial matrix side of the membrane; that stretch reads ISTAPAESKPRSWKNTAVR. Residues 44 to 61 traverse the membrane as a helical; Signal-anchor for type II membrane protein segment; it reads LGLAAGAIYYYNTSNVFA. Residues 62–187 lie on the Mitochondrial intermembrane side of the membrane; the sequence is ENPSFSLNNQ…MDCIEKFKCV (126 aa). The disordered stretch occupies residues 73–115; it reads KKNSAEEPLPTLDSIKPRIREERESAAPKPNAEQAPAQELPFG. Positions 87–98 are enriched in basic and acidic residues; that stretch reads IKPRIREERESA. Disulfide bonds link C146–C148 and C167–C180. The CHCH domain occupies 154 to 187; the sequence is HGPCGEEFKAAFSCFVYSEEEPKGMDCIEKFKCV. The Cx9C motif motif lies at 157–167; sequence CGEEFKAAFSC.

In terms of assembly, monomer. Requires Cu(2+) as cofactor. Zn(2+) is required as a cofactor.

The protein localises to the mitochondrion inner membrane. Required for the import and folding of small cysteine-containing proteins (small Tim) in the mitochondrial intermembrane space (IMS). Forms a redox cycle with ERV1 that involves a disulfide relay system. Precursor proteins to be imported into the IMS are translocated in their reduced form into the mitochondria. The oxidized form of MIA40 forms a transient intermolecular disulfide bridge with the reduced precursor protein, resulting in oxidation of the precursor protein that now contains an intramolecular disulfide bond and is able to undergo folding in the IMS. In Aspergillus oryzae (strain ATCC 42149 / RIB 40) (Yellow koji mold), this protein is Mitochondrial intermembrane space import and assembly protein 40 (mia40).